The primary structure comprises 220 residues: Thiopurine S-methyltransferase (220 aa).

4 residues coordinate S-adenosyl-L-methionine: Trp10, Leu45, Glu66, and Arg123.

Belongs to the class I-like SAM-binding methyltransferase superfamily. TPMT family.

The protein resides in the cytoplasm. It catalyses the reaction S-adenosyl-L-methionine + a thiopurine = S-adenosyl-L-homocysteine + a thiopurine S-methylether.. The protein is Thiopurine S-methyltransferase of Pseudomonas syringae pv. tomato (strain ATCC BAA-871 / DC3000).